We begin with the raw amino-acid sequence, 181 residues long: Probable chemoreceptor glutamine deamidase CheD (181 aa).

It belongs to the CheD family.

It catalyses the reaction L-glutaminyl-[protein] + H2O = L-glutamyl-[protein] + NH4(+). Functionally, probably deamidates glutamine residues to glutamate on methyl-accepting chemotaxis receptors (MCPs), playing an important role in chemotaxis. The polypeptide is Probable chemoreceptor glutamine deamidase CheD (Agrobacterium fabrum (strain C58 / ATCC 33970) (Agrobacterium tumefaciens (strain C58))).